The sequence spans 347 residues: S-adenosylmethionine:tRNA ribosyltransferase-isomerase (347 aa).

Belongs to the QueA family. In terms of assembly, monomer.

The protein localises to the cytoplasm. It carries out the reaction 7-aminomethyl-7-carbaguanosine(34) in tRNA + S-adenosyl-L-methionine = epoxyqueuosine(34) in tRNA + adenine + L-methionine + 2 H(+). It functions in the pathway tRNA modification; tRNA-queuosine biosynthesis. Transfers and isomerizes the ribose moiety from AdoMet to the 7-aminomethyl group of 7-deazaguanine (preQ1-tRNA) to give epoxyqueuosine (oQ-tRNA). This is S-adenosylmethionine:tRNA ribosyltransferase-isomerase from Exiguobacterium sibiricum (strain DSM 17290 / CCUG 55495 / CIP 109462 / JCM 13490 / 255-15).